Reading from the N-terminus, the 536-residue chain is Glycine--tRNA ligase (536 aa).

The segment at 56–67 (LVSPAGAPSTFE) is insert. Substrate contacts are provided by Arg-106 and Glu-213. Residues 245 to 247 (RNE), 255 to 260 (FRSREF), and 333 to 334 (EL) each bind ATP. 260–264 (FEQME) lines the substrate pocket. Residues 350-372 (EGKLDPATNPMTVELNEHGKPKH) are insert. Position 396–400 (396–400 (EPSAG)) interacts with substrate. 400-403 (GADR) provides a ligand contact to ATP.

Belongs to the class-II aminoacyl-tRNA synthetase family. As to quaternary structure, homodimer.

It is found in the cytoplasm. It carries out the reaction tRNA(Gly) + glycine + ATP = glycyl-tRNA(Gly) + AMP + diphosphate. In terms of biological role, catalyzes the attachment of glycine to tRNA(Gly). This Rhodopirellula baltica (strain DSM 10527 / NCIMB 13988 / SH1) protein is Glycine--tRNA ligase.